Consider the following 86-residue polypeptide: Putative membrane protein insertion efficiency factor (86 aa).

The interval 64–86 (GVDPVPKKSSSKTSTTACGCGHS) is disordered. Over residues 70 to 79 (KKSSSKTSTT) the composition is skewed to low complexity.

Belongs to the UPF0161 family.

It localises to the cell inner membrane. In terms of biological role, could be involved in insertion of integral membrane proteins into the membrane. This chain is Putative membrane protein insertion efficiency factor, found in Janthinobacterium sp. (strain Marseille) (Minibacterium massiliensis).